Consider the following 504-residue polypeptide: Glycerol kinase (504 aa).

Thr12 is an ADP binding site. ATP contacts are provided by Thr12, Thr13, and Ser14. Thr12 is a sn-glycerol 3-phosphate binding site. Arg16 lines the ADP pocket. Sn-glycerol 3-phosphate-binding residues include Arg82, Glu83, Tyr134, and Asp246. Positions 82, 83, 134, 246, and 247 each coordinate glycerol. Thr268 and Gly312 together coordinate ADP. ATP is bound by residues Thr268, Gly312, Gln316, and Gly413. ADP-binding residues include Gly413 and Asn417.

It belongs to the FGGY kinase family.

It carries out the reaction glycerol + ATP = sn-glycerol 3-phosphate + ADP + H(+). Its pathway is polyol metabolism; glycerol degradation via glycerol kinase pathway; sn-glycerol 3-phosphate from glycerol: step 1/1. Its activity is regulated as follows. Inhibited by fructose 1,6-bisphosphate (FBP). In terms of biological role, key enzyme in the regulation of glycerol uptake and metabolism. Catalyzes the phosphorylation of glycerol to yield sn-glycerol 3-phosphate. This is Glycerol kinase from Pseudarthrobacter chlorophenolicus (strain ATCC 700700 / DSM 12829 / CIP 107037 / JCM 12360 / KCTC 9906 / NCIMB 13794 / A6) (Arthrobacter chlorophenolicus).